Here is a 111-residue protein sequence, read N- to C-terminus: Putative gamma-glutamylcyclotransferase BH1612 (111 aa).

14-17 is a binding site for substrate; sequence YGHL. The Proton acceptor role is filled by Glu-55.

Belongs to the gamma-glutamylcyclotransferase family.

In terms of biological role, putative gamma-glutamylcyclotransferase. The sequence is that of Putative gamma-glutamylcyclotransferase BH1612 from Halalkalibacterium halodurans (strain ATCC BAA-125 / DSM 18197 / FERM 7344 / JCM 9153 / C-125) (Bacillus halodurans).